A 376-amino-acid polypeptide reads, in one-letter code: MQWASILLLRGLCSLSQGQYEEDSHWWLQYLRNQQSTYYDPYDTYPYETSDPYPYEVEEGPAYAYGAPPPPEPRDCPQECDCPPNFPTAMYCDNRNLKYLPFVPSRMKYVYFQNNQIAAIQEGVFDNATGLLWIALHGNQITSDKIGRKVFSKLRHLERLYLDHNNLTRMPGPLPRSLRELHLDHNQISRVPNNALEGLENLTALYLHHNEIQEVGSSMRGLRSLILLDLSYNHLRRVPDGLPSALEQLYLEHNNVYTVPDSYFRGSPKLLYVRLSHNSLTNNGLATNTFNSSSLLELDLSYNQLQKIPPVNTNLENLYLQGNRINEFSISSFCTVVDVMNFSKLQVLRLDGNEIKRSAMPVDAPLCLRLASLIEI.

The N-terminal stretch at 1-18 (MQWASILLLRGLCSLSQG) is a signal peptide. At Gln19 the chain carries Pyrrolidone carboxylic acid. 6 positions are modified to sulfotyrosine: Tyr20, Tyr38, Tyr53, Tyr55, Tyr63, and Tyr65. The LRRNT domain maps to 67–105 (APPPPEPRDCPQECDCPPNFPTAMYCDNRNLKYLPFVPS). LRR repeat units lie at residues 106-127 (RMKYVYFQNNQIAAIQEGVFDN), 130-143 (GLLWIALHGNQITS), 156-176 (HLERLYLDHNNLTRMPGPLPR), 177-198 (SLRELHLDHNQISRVPNNALEG), 201-222 (NLTALYLHHNEIQEVGSSMRGL), 224-245 (SLILLDLSYNHLRRVPDGLPSA), 246-266 (LEQLYLEHNNVYTVPDSYFRG), and 269-289 (KLLYVRLSHNSLTNNGLATNT). Asn127 is a glycosylation site (N-linked (GlcNAc...) (keratan sulfate) asparagine). Residue Asn166 is glycosylated (N-linked (GlcNAc...) (keratan sulfate) asparagine). Asn201 carries an N-linked (GlcNAc...) (keratan sulfate) asparagine glycan. N-linked (GlcNAc...) (keratan sulfate) asparagine glycosylation occurs at Asn291. LRR repeat units follow at residues 294 to 315 (SLLELDLSYNQLQKIPPVNTNL) and 316 to 335 (ENLYLQGNRINEFSISSFCT). Cysteines 334 and 367 form a disulfide. N-linked (GlcNAc...) asparagine glycosylation is present at Asn341. The LRR 11 repeat unit spans residues 344–367 (KLQVLRLDGNEIKRSAMPVDAPLC).

The protein belongs to the small leucine-rich proteoglycan (SLRP) family. SLRP class II subfamily. Binds to type I and type II collagen. Post-translationally, binds keratan sulfate chains.

It localises to the secreted. It is found in the extracellular space. The protein localises to the extracellular matrix. Its function is as follows. Affects the rate of fibrils formation. May have a primary role in collagen fibrillogenesis. In Rattus norvegicus (Rat), this protein is Fibromodulin (Fmod).